The following is a 443-amino-acid chain: Threonine/serine transporter TdcC (443 aa).

11 helical membrane passes run 22 to 42 (TTWT…FFPI), 44 to 64 (AGFG…PIAF), 97 to 117 (GVVI…IYGV), 135 to 155 (ALNR…IIWF), 163 to 183 (VMSF…LSLI), 207 to 227 (ILVT…FSPI), 259 to 279 (ASIL…FALS), 319 to 339 (ASII…LGTL), 366 to 386 (LSMV…PNIL), 389 to 409 (IEAM…MYAI), and 422 to 442 (IDNV…VYKV).

Belongs to the amino acid/polyamine transporter 2 family. SdaC/TdcC subfamily.

The protein resides in the cell inner membrane. It carries out the reaction L-threonine(in) + H(+)(in) = L-threonine(out) + H(+)(out). It catalyses the reaction L-serine(in) + H(+)(in) = L-serine(out) + H(+)(out). Its function is as follows. Involved in the import of threonine and serine into the cell, with the concomitant import of a proton (symport system). This Escherichia fergusonii (strain ATCC 35469 / DSM 13698 / CCUG 18766 / IAM 14443 / JCM 21226 / LMG 7866 / NBRC 102419 / NCTC 12128 / CDC 0568-73) protein is Threonine/serine transporter TdcC.